The sequence spans 230 residues: 5'-methylthioadenosine/S-adenosylhomocysteine nucleosidase (230 aa).

Residue E12 is the Proton acceptor of the active site. Substrate-binding positions include G78, I152, and 173 to 174 (ME). D197 serves as the catalytic Proton donor.

It belongs to the PNP/UDP phosphorylase family. MtnN subfamily.

It carries out the reaction S-adenosyl-L-homocysteine + H2O = S-(5-deoxy-D-ribos-5-yl)-L-homocysteine + adenine. The enzyme catalyses S-methyl-5'-thioadenosine + H2O = 5-(methylsulfanyl)-D-ribose + adenine. It catalyses the reaction 5'-deoxyadenosine + H2O = 5-deoxy-D-ribose + adenine. Its pathway is amino-acid biosynthesis; L-methionine biosynthesis via salvage pathway; S-methyl-5-thio-alpha-D-ribose 1-phosphate from S-methyl-5'-thioadenosine (hydrolase route): step 1/2. Its function is as follows. Catalyzes the irreversible cleavage of the glycosidic bond in both 5'-methylthioadenosine (MTA) and S-adenosylhomocysteine (SAH/AdoHcy) to adenine and the corresponding thioribose, 5'-methylthioribose and S-ribosylhomocysteine, respectively. Also cleaves 5'-deoxyadenosine, a toxic by-product of radical S-adenosylmethionine (SAM) enzymes, into 5-deoxyribose and adenine. The protein is 5'-methylthioadenosine/S-adenosylhomocysteine nucleosidase of Actinobacillus succinogenes (strain ATCC 55618 / DSM 22257 / CCUG 43843 / 130Z).